The chain runs to 760 residues: General transcription and DNA repair factor IIH helicase subunit XPD (760 aa).

The Helicase ATP-binding domain maps to 7–283; sequence GLLVYFPYDY…KETDEQRLRE (277 aa). ATP is bound at residue 42–49; that stretch reads MPSGTGKT. Cys-116, Cys-134, Cys-155, and Cys-190 together coordinate [4Fe-4S] cluster. The DEAH box motif lies at 234-237; it reads DEAH. The mediates interaction with MMS19 stretch occupies residues 438–637; it reads MDASLAIKPV…TQSRILKARL (200 aa). Residues 682-695 carry the Nuclear localization signal motif; it reads KRFARADKRGKLPR.

The protein belongs to the helicase family. RAD3/XPD subfamily. As to quaternary structure, component of the 7-subunit TFIIH core complex composed of XPB/ERCC3, XPD/ERCC2, GTF2H1, GTF2H2, GTF2H3, GTF2H4 and GTF2H5, which is active in NER. The core complex associates with the 3-subunit CDK-activating kinase (CAK) module composed of CCNH/cyclin H, CDK7 and MNAT1 to form the 10-subunit holoenzyme (holo-TFIIH) active in transcription. The interaction with GTF2H2 results in the stimulation of the 5'--&gt;3' helicase activity. Component of the MMXD complex, which includes CIAO1, ERCC2, CIAO2B, MMS19 and SLC25A5. Interacts with CIAO1 and CIAO2B; the interaction WITH CIAO2B is direct. Interacts with ATF7IP. Interacts directly with MMS19. Part of TBP-based Pol II pre-initiation complex (PIC), in which Pol II core assembles with general transcription factors and other specific initiation factors including GTF2E1, GTF2E2, GTF2F1, GTF2F2, TCEA1, ERCC2, ERCC3, GTF2H2, GTF2H3, GTF2H4, GTF2H5, GTF2A1, GTF2A2, GTF2B and TBP; this large multi-subunit PIC complex mediates DNA unwinding and targets Pol II core to the transcription start site where the first phosphodiester bond forms. Mg(2+) is required as a cofactor. [4Fe-4S] cluster serves as cofactor. ISGylated.

It localises to the nucleus. The protein resides in the cytoplasm. The protein localises to the cytoskeleton. It is found in the spindle. The enzyme catalyses Couples ATP hydrolysis with the unwinding of duplex DNA at the replication fork by translocating in the 5'-3' direction. This creates two antiparallel DNA single strands (ssDNA). The leading ssDNA polymer is the template for DNA polymerase III holoenzyme which synthesizes a continuous strand.. The catalysed reaction is ATP + H2O = ADP + phosphate + H(+). ATP-dependent 5'-3' DNA helicase, component of the general transcription and DNA repair factor IIH (TFIIH) core complex, which is involved in general and transcription-coupled nucleotide excision repair (NER) of damaged DNA and, when complexed to CDK-activating kinase (CAK), involved in transcription by RNA polymerase II. In NER, TFIIH acts by opening DNA around the lesion to allow the excision of the damaged oligonucleotide and its replacement by a new DNA fragment. The ATP-dependent helicase activity of XPD/ERCC2 is required for DNA opening. In transcription, TFIIH has an essential role in transcription initiation. When the pre-initiation complex (PIC) has been established, TFIIH is required for promoter opening and promoter escape. Phosphorylation of the C-terminal tail (CTD) of the largest subunit of RNA polymerase II by the kinase module CAK controls the initiation of transcription. XPD/ERCC2 acts by forming a bridge between CAK and the core-TFIIH complex. Involved in the regulation of vitamin-D receptor activity. As part of the mitotic spindle-associated MMXD complex it plays a role in chromosome segregation. Might have a role in aging process and could play a causative role in the generation of skin cancers. This Bos taurus (Bovine) protein is General transcription and DNA repair factor IIH helicase subunit XPD (ERCC2).